The following is a 246-amino-acid chain: Bidirectional sugar transporter SWEET3a (246 aa).

Residues 1–6 (MFPDIR) lie on the Extracellular side of the membrane. A helical membrane pass occupies residues 7–27 (FIVGIIGSVACMLLYSAPILT). Residues 7–96 (FIVGIIGSVA…ISIYVWFAPR (90 aa)) enclose the MtN3/slv 1 domain. The Cytoplasmic segment spans residues 28–42 (FKRVIKKASVEEFSC). A helical transmembrane segment spans residues 43–63 (IPYILALFSCLTYSWYGFPVV). Topologically, residues 64–74 (SYGWENMTVCS) are extracellular. Asn-69 is a glycosylation site (N-linked (GlcNAc...) asparagine). A helical membrane pass occupies residues 75 to 95 (ISSLGVLFEGTFISIYVWFAP). Topologically, residues 96–101 (RGKKKQ) are cytoplasmic. Residues 102-122 (VMLMASLILAVFCMTVFFSSF) form a helical membrane-spanning segment. At 123–131 (SIHNHHIRK) the chain is on the extracellular side. The chain crosses the membrane as a helical span at residues 132-152 (VFVGSVGLVSSISMYGSPLVA). Residues 133-217 (FVGSVGLVSS…VVYCIYSKCK (85 aa)) form the MtN3/slv 2 domain. The Cytoplasmic segment spans residues 153–166 (MKQVIRTKSVEFMP). A helical membrane pass occupies residues 167–187 (FYLSLFTLFTSLTWMAYGVIG). At 188 to 191 (RDPF) the chain is on the extracellular side. A helical transmembrane segment spans residues 192–212 (IATPNCIGSIMGILQLVVYCI). Residues 213–246 (YSKCKEAPKVLHDIEQANVVKIPTSHVDTKGHNP) lie on the Cytoplasmic side of the membrane.

The protein belongs to the SWEET sugar transporter family. Forms homooligomers and/or heterooligomers.

It is found in the cell membrane. In terms of biological role, mediates both low-affinity uptake and efflux of sugar across the plasma membrane. In Oryza sativa subsp. japonica (Rice), this protein is Bidirectional sugar transporter SWEET3a (SWEET3A).